We begin with the raw amino-acid sequence, 400 residues long: Elongation factor Tu 2 (400 aa).

Residues 10–209 enclose the tr-type G domain; sequence KPHLNIGTIG…AVDSYIPLPQ (200 aa). Positions 19-26 are G1; that stretch reads GHIDHGKT. Residue 19–26 coordinates GTP; the sequence is GHIDHGKT. Position 26 (T26) interacts with Mg(2+). The interval 60–64 is G2; sequence GITIN. The segment at 81–84 is G3; the sequence is DCPG. GTP is bound by residues 81–85 and 136–139; these read DCPGH and NKID. Residues 136-139 form a G4 region; sequence NKID. Positions 174 to 176 are G5; sequence SAL.

Belongs to the TRAFAC class translation factor GTPase superfamily. Classic translation factor GTPase family. EF-Tu/EF-1A subfamily. In terms of assembly, monomer.

The protein resides in the cytoplasm. It carries out the reaction GTP + H2O = GDP + phosphate + H(+). Functionally, GTP hydrolase that promotes the GTP-dependent binding of aminoacyl-tRNA to the A-site of ribosomes during protein biosynthesis. This Syntrophomonas wolfei subsp. wolfei (strain DSM 2245B / Goettingen) protein is Elongation factor Tu 2.